A 214-amino-acid polypeptide reads, in one-letter code: Outer-membrane lipoprotein carrier protein (214 aa).

An N-terminal signal peptide occupies residues 1–23; sequence MNKRITVLSLLLATSLSSAAAMA.

Belongs to the LolA family. In terms of assembly, monomer.

It localises to the periplasm. Participates in the translocation of lipoproteins from the inner membrane to the outer membrane. Only forms a complex with a lipoprotein if the residue after the N-terminal Cys is not an aspartate (The Asp acts as a targeting signal to indicate that the lipoprotein should stay in the inner membrane). In Shewanella frigidimarina (strain NCIMB 400), this protein is Outer-membrane lipoprotein carrier protein.